Reading from the N-terminus, the 456-residue chain is UDP-N-acetylmuramate--L-alanine ligase (456 aa).

112-118 (GAHGKTT) contributes to the ATP binding site.

This sequence belongs to the MurCDEF family.

Its subcellular location is the cytoplasm. The catalysed reaction is UDP-N-acetyl-alpha-D-muramate + L-alanine + ATP = UDP-N-acetyl-alpha-D-muramoyl-L-alanine + ADP + phosphate + H(+). The protein operates within cell wall biogenesis; peptidoglycan biosynthesis. Functionally, cell wall formation. In Desulfatibacillum aliphaticivorans, this protein is UDP-N-acetylmuramate--L-alanine ligase.